The sequence spans 280 residues: Chlorophyll a-b binding protein CP26, chloroplastic (280 aa).

The transit peptide at 1–48 directs the protein to the chloroplast; it reads MASLGVSEMLGTPLNFRAVSRSSAPLASSPSTFKTVALFSKKKPAPAK. A chlorophyll b-binding site is contributed by phenylalanine 70. The chlorophyll a site is built by tyrosine 95, glutamate 114, and histidine 117. 2 helical membrane passes run 110–130 and 167–187; these read YQAF…GFII and IPIN…GAEY. The chlorophyll b site is built by arginine 119, isoleucine 167, glutamate 186, and arginine 189. Chlorophyll a-binding residues include lysine 224, glutamate 225, asparagine 228, arginine 230, glutamine 242, and histidine 257. The chain crosses the membrane as a helical span at residues 231-251; sequence LAMFAMLGFFIQAYVTGEGPV.

This sequence belongs to the light-harvesting chlorophyll a/b-binding (LHC) protein family. In terms of assembly, forms heterotrimers with LHCB3. The LHC complex consists of chlorophyll a-b binding proteins. Binds at least 14 chlorophylls (8 Chl-a and 6 Chl-b) and carotenoids such as lutein and neoxanthin. is required as a cofactor. In terms of processing, photoregulated by reversible phosphorylation of its threonine residues.

It localises to the plastid. The protein localises to the chloroplast thylakoid membrane. Functionally, the light-harvesting complex (LHC) functions as a light receptor, it captures and delivers excitation energy to photosystems with which it is closely associated. The chain is Chlorophyll a-b binding protein CP26, chloroplastic (LHCB5) from Arabidopsis thaliana (Mouse-ear cress).